Consider the following 689-residue polypeptide: Glycine--tRNA ligase beta subunit (689 aa).

This sequence belongs to the class-II aminoacyl-tRNA synthetase family. In terms of assembly, tetramer of two alpha and two beta subunits.

It localises to the cytoplasm. The enzyme catalyses tRNA(Gly) + glycine + ATP = glycyl-tRNA(Gly) + AMP + diphosphate. The polypeptide is Glycine--tRNA ligase beta subunit (Salmonella paratyphi A (strain ATCC 9150 / SARB42)).